A 300-amino-acid polypeptide reads, in one-letter code: MTQCDARLPQGGVKLADYTTWRVGGAAEWLAEPASLDETQAWIEWAAHQGMPCRVIGAGSNLLIHDDGLPGLSLCLRKLQGLQLDATTGTVEVLAGEPIPSLARRAARAGLHGLEWSIGIPGTAGGAAVMNAGAQGGCTAEWLESVRVVPLEGGNCFELQRHQLDFAYRHSRLQEDNLVVLSARFRLQPGHDPDELKRVTTANLSHRTTTQPYQQPSCGSVFRNPEPLKAGRLIEEQGLKGTRIGGAEISTVHANFIVNTGDAQAKDIAQLIHLVQDRIEAKHGIRLHTEVKRLGFASAA.

The 169-residue stretch at 22-190 (RVGGAAEWLA…LSARFRLQPG (169 aa)) folds into the FAD-binding PCMH-type domain. Arginine 169 is a catalytic residue. The Proton donor role is filled by serine 220. The active site involves glutamate 290.

It belongs to the MurB family. FAD is required as a cofactor.

It localises to the cytoplasm. The catalysed reaction is UDP-N-acetyl-alpha-D-muramate + NADP(+) = UDP-N-acetyl-3-O-(1-carboxyvinyl)-alpha-D-glucosamine + NADPH + H(+). The protein operates within cell wall biogenesis; peptidoglycan biosynthesis. Its function is as follows. Cell wall formation. The protein is UDP-N-acetylenolpyruvoylglucosamine reductase of Synechococcus sp. (strain CC9605).